The sequence spans 896 residues: Putative mannosylglycerate hydrolase (896 aa).

Residues H12, D14, D125, and H348 each contribute to the a divalent metal cation site. Catalysis depends on D125, which acts as the Nucleophile.

This sequence belongs to the glycosyl hydrolase 38 family. A divalent metal cation serves as cofactor.

It carries out the reaction (2R)-2-O-(6-phospho-alpha-D-mannosyl)-glycerate + H2O = alpha-D-mannose 6-phosphate + (R)-glycerate. May hydrolyze 6-phospho-mannosyl-D-glycerate to mannose-6-phosphate and glycerate. The protein is Putative mannosylglycerate hydrolase (mngB) of Halalkalibacterium halodurans (strain ATCC BAA-125 / DSM 18197 / FERM 7344 / JCM 9153 / C-125) (Bacillus halodurans).